Consider the following 125-residue polypeptide: Small ribosomal subunit protein uS13 (125 aa).

This sequence belongs to the universal ribosomal protein uS13 family. As to quaternary structure, part of the 30S ribosomal subunit. Forms a loose heterodimer with protein S19. Forms two bridges to the 50S subunit in the 70S ribosome.

In terms of biological role, located at the top of the head of the 30S subunit, it contacts several helices of the 16S rRNA. In the 70S ribosome it contacts the 23S rRNA (bridge B1a) and protein L5 of the 50S subunit (bridge B1b), connecting the 2 subunits; these bridges are implicated in subunit movement. Contacts the tRNAs in the A and P-sites. The chain is Small ribosomal subunit protein uS13 from Rickettsia felis (strain ATCC VR-1525 / URRWXCal2) (Rickettsia azadi).